A 496-amino-acid polypeptide reads, in one-letter code: Zinc finger protein PLAGL2 (496 aa).

6 consecutive C2H2-type zinc fingers follow at residues 68–92, 98–120, 127–149, 156–178, 191–213, and 219–242; these read YSCPQLHCGKAFASKYKLYRHMATH, HQCMYCDKMFHRKDHLRNHLQTH, LHCSECGKNYNTKLGYRRHLAMH, LSCKVCLQTFESTQALLEHLKAH, HPCDHCDRRFYTRKDVRRHLVVH, and FLCQYCAQRFGRKDHLTRHVKKSH.

The protein belongs to the krueppel C2H2-type zinc-finger protein family.

It is found in the nucleus. In terms of biological role, shows weak transcriptional activatory activity. The chain is Zinc finger protein PLAGL2 (PLAGL2) from Homo sapiens (Human).